A 393-amino-acid chain; its full sequence is 8-amino-7-oxononanoate synthase (393 aa).

R18 contacts substrate. Position 105–106 (105–106) interacts with pyridoxal 5'-phosphate; that stretch reads GY. Position 130 (H130) interacts with substrate. Pyridoxal 5'-phosphate-binding residues include S178, H206, and T234. At K237 the chain carries N6-(pyridoxal phosphate)lysine. A substrate-binding site is contributed by T353.

This sequence belongs to the class-II pyridoxal-phosphate-dependent aminotransferase family. BioF subfamily. Homodimer. Pyridoxal 5'-phosphate serves as cofactor.

It carries out the reaction 6-carboxyhexanoyl-[ACP] + L-alanine + H(+) = (8S)-8-amino-7-oxononanoate + holo-[ACP] + CO2. It functions in the pathway cofactor biosynthesis; biotin biosynthesis. In terms of biological role, catalyzes the decarboxylative condensation of pimeloyl-[acyl-carrier protein] and L-alanine to produce 8-amino-7-oxononanoate (AON), [acyl-carrier protein], and carbon dioxide. This is 8-amino-7-oxononanoate synthase from Geotalea daltonii (strain DSM 22248 / JCM 15807 / FRC-32) (Geobacter daltonii).